The chain runs to 265 residues: Hydroxyethylthiazole kinase (265 aa).

Met36 is a binding site for substrate. The ATP site is built by Lys112 and Ser160. Gly187 is a substrate binding site.

Belongs to the Thz kinase family. Requires Mg(2+) as cofactor.

It catalyses the reaction 5-(2-hydroxyethyl)-4-methylthiazole + ATP = 4-methyl-5-(2-phosphooxyethyl)-thiazole + ADP + H(+). It functions in the pathway cofactor biosynthesis; thiamine diphosphate biosynthesis; 4-methyl-5-(2-phosphoethyl)-thiazole from 5-(2-hydroxyethyl)-4-methylthiazole: step 1/1. Its function is as follows. Catalyzes the phosphorylation of the hydroxyl group of 4-methyl-5-beta-hydroxyethylthiazole (THZ). The polypeptide is Hydroxyethylthiazole kinase (Clostridium perfringens (strain SM101 / Type A)).